Consider the following 156-residue polypeptide: ATP synthase subunit b (156 aa).

The chain crosses the membrane as a helical span at residues 1–21 (MNVTVTLIGQMVAFGILVWFV).

It belongs to the ATPase B chain family. F-type ATPases have 2 components, F(1) - the catalytic core - and F(0) - the membrane proton channel. F(1) has five subunits: alpha(3), beta(3), gamma(1), delta(1), epsilon(1). F(0) has three main subunits: a(1), b(2) and c(10-14). The alpha and beta chains form an alternating ring which encloses part of the gamma chain. F(1) is attached to F(0) by a central stalk formed by the gamma and epsilon chains, while a peripheral stalk is formed by the delta and b chains.

It is found in the cell inner membrane. Functionally, f(1)F(0) ATP synthase produces ATP from ADP in the presence of a proton or sodium gradient. F-type ATPases consist of two structural domains, F(1) containing the extramembraneous catalytic core and F(0) containing the membrane proton channel, linked together by a central stalk and a peripheral stalk. During catalysis, ATP synthesis in the catalytic domain of F(1) is coupled via a rotary mechanism of the central stalk subunits to proton translocation. Its function is as follows. Component of the F(0) channel, it forms part of the peripheral stalk, linking F(1) to F(0). The sequence is that of ATP synthase subunit b from Nitrosococcus oceani (strain ATCC 19707 / BCRC 17464 / JCM 30415 / NCIMB 11848 / C-107).